A 298-amino-acid chain; its full sequence is ATP phosphoribosyltransferase (298 aa).

It belongs to the ATP phosphoribosyltransferase family. Long subfamily. Mg(2+) is required as a cofactor.

It localises to the cytoplasm. The catalysed reaction is 1-(5-phospho-beta-D-ribosyl)-ATP + diphosphate = 5-phospho-alpha-D-ribose 1-diphosphate + ATP. It functions in the pathway amino-acid biosynthesis; L-histidine biosynthesis; L-histidine from 5-phospho-alpha-D-ribose 1-diphosphate: step 1/9. With respect to regulation, feedback inhibited by histidine. Functionally, catalyzes the condensation of ATP and 5-phosphoribose 1-diphosphate to form N'-(5'-phosphoribosyl)-ATP (PR-ATP). Has a crucial role in the pathway because the rate of histidine biosynthesis seems to be controlled primarily by regulation of HisG enzymatic activity. The sequence is that of ATP phosphoribosyltransferase from Aliivibrio fischeri (strain MJ11) (Vibrio fischeri).